Reading from the N-terminus, the 331-residue chain is 6-phosphogluconolactonase (331 aa).

K287 is subject to N6-acetyllysine.

It belongs to the cycloisomerase 2 family.

It carries out the reaction 6-phospho-D-glucono-1,5-lactone + H2O = 6-phospho-D-gluconate + H(+). Its pathway is carbohydrate degradation; pentose phosphate pathway; D-ribulose 5-phosphate from D-glucose 6-phosphate (oxidative stage): step 2/3. Functionally, catalyzes the hydrolysis of 6-phosphogluconolactone to 6-phosphogluconate. The chain is 6-phosphogluconolactonase from Escherichia coli O139:H28 (strain E24377A / ETEC).